A 413-amino-acid chain; its full sequence is Zinc finger CCCH domain-containing protein 6 (413 aa).

Disordered stretches follow at residues 28-61 (PSQV…FGGP), 159-191 (DSAS…TLPA), and 333-356 (QPGG…RDSK). The segment covering 176–189 (PSITDENTSTSSTL) has biased composition (polar residues). A C3H1-type zinc finger spans residues 357–385 (PKIMKACMYFNSARGCRHGANCMYQHDAT). Positions 389 to 403 (PRNLNNGNINTSDMQ) are enriched in polar residues. Residues 389 to 413 (PRNLNNGNINTSDMQNAKRMRFDRD) are disordered.

The sequence is that of Zinc finger CCCH domain-containing protein 6 from Arabidopsis thaliana (Mouse-ear cress).